A 134-amino-acid chain; its full sequence is 6,7-dimethyl-8-ribityllumazine synthase (134 aa).

Residues Phe12, Val44–Asp46, and Ser68–Ile70 contribute to the 5-amino-6-(D-ribitylamino)uracil site. Glu73 to Thr74 provides a ligand contact to (2S)-2-hydroxy-3-oxobutyl phosphate. His76 (proton donor) is an active-site residue. Residue Leu101 participates in 5-amino-6-(D-ribitylamino)uracil binding. Residue Arg116 coordinates (2S)-2-hydroxy-3-oxobutyl phosphate.

Belongs to the DMRL synthase family.

The enzyme catalyses (2S)-2-hydroxy-3-oxobutyl phosphate + 5-amino-6-(D-ribitylamino)uracil = 6,7-dimethyl-8-(1-D-ribityl)lumazine + phosphate + 2 H2O + H(+). Its pathway is cofactor biosynthesis; riboflavin biosynthesis; riboflavin from 2-hydroxy-3-oxobutyl phosphate and 5-amino-6-(D-ribitylamino)uracil: step 1/2. Functionally, catalyzes the formation of 6,7-dimethyl-8-ribityllumazine by condensation of 5-amino-6-(D-ribitylamino)uracil with 3,4-dihydroxy-2-butanone 4-phosphate. This is the penultimate step in the biosynthesis of riboflavin. This chain is 6,7-dimethyl-8-ribityllumazine synthase, found in Methanosarcina mazei (strain ATCC BAA-159 / DSM 3647 / Goe1 / Go1 / JCM 11833 / OCM 88) (Methanosarcina frisia).